The primary structure comprises 209 residues: Uracil phosphoribosyltransferase (209 aa).

Residues arginine 79, arginine 104, and 131–139 (DPMLATGGS) each bind 5-phospho-alpha-D-ribose 1-diphosphate. Residues isoleucine 194 and 199–201 (GDA) each bind uracil. Residue aspartate 200 coordinates 5-phospho-alpha-D-ribose 1-diphosphate.

Belongs to the UPRTase family. It depends on Mg(2+) as a cofactor.

It catalyses the reaction UMP + diphosphate = 5-phospho-alpha-D-ribose 1-diphosphate + uracil. It functions in the pathway pyrimidine metabolism; UMP biosynthesis via salvage pathway; UMP from uracil: step 1/1. Its activity is regulated as follows. Allosterically activated by GTP. Catalyzes the conversion of uracil and 5-phospho-alpha-D-ribose 1-diphosphate (PRPP) to UMP and diphosphate. This chain is Uracil phosphoribosyltransferase, found in Streptococcus mutans serotype c (strain ATCC 700610 / UA159).